A 297-amino-acid chain; its full sequence is Aspartate carbamoyltransferase catalytic subunit (297 aa).

Carbamoyl phosphate is bound by residues Arg-49 and Thr-50. Lys-77 contributes to the L-aspartate binding site. Residues Arg-99, His-129, and Gln-132 each coordinate carbamoyl phosphate. The L-aspartate site is built by Arg-162 and Arg-215. Carbamoyl phosphate is bound by residues Gly-256 and Pro-257.

The protein belongs to the aspartate/ornithine carbamoyltransferase superfamily. ATCase family. Heterododecamer (2C3:3R2) of six catalytic PyrB chains organized as two trimers (C3), and six regulatory PyrI chains organized as three dimers (R2).

It carries out the reaction carbamoyl phosphate + L-aspartate = N-carbamoyl-L-aspartate + phosphate + H(+). It participates in pyrimidine metabolism; UMP biosynthesis via de novo pathway; (S)-dihydroorotate from bicarbonate: step 2/3. In terms of biological role, catalyzes the condensation of carbamoyl phosphate and aspartate to form carbamoyl aspartate and inorganic phosphate, the committed step in the de novo pyrimidine nucleotide biosynthesis pathway. This chain is Aspartate carbamoyltransferase catalytic subunit, found in Legionella pneumophila (strain Paris).